The following is a 47-amino-acid chain: Light-harvesting protein B800/850/890 alpha-2 chain (47 aa).

The Cytoplasmic segment spans residues 1 to 12 (MWRMWKILDYRR). The helical transmembrane segment at 13–33 (TVVLAHVGMAVLALLIHFILL) threads the bilayer. Histidine 29 serves as a coordination point for a bacteriochlorophyll. Residues 34–47 (STESFNWLEGNPYG) are Periplasmic-facing.

The protein belongs to the antenna complex alpha subunit family. In terms of assembly, the core complex is formed by different alpha and beta chains, binding bacteriochlorophyll molecules, and arranged most probably in tetrameric structures disposed around the reaction center. The non-pigmented gamma chains may constitute additional components.

It is found in the cell inner membrane. Antenna complexes are light-harvesting systems, which transfer the excitation energy to the reaction centers. The polypeptide is Light-harvesting protein B800/850/890 alpha-2 chain (Halorhodospira halophila (strain DSM 244 / SL1) (Ectothiorhodospira halophila (strain DSM 244 / SL1))).